Here is a 172-residue protein sequence, read N- to C-terminus: Adenine phosphoribosyltransferase (172 aa).

The protein belongs to the purine/pyrimidine phosphoribosyltransferase family. As to quaternary structure, homodimer.

It localises to the cytoplasm. The enzyme catalyses AMP + diphosphate = 5-phospho-alpha-D-ribose 1-diphosphate + adenine. It participates in purine metabolism; AMP biosynthesis via salvage pathway; AMP from adenine: step 1/1. In terms of biological role, catalyzes a salvage reaction resulting in the formation of AMP, that is energically less costly than de novo synthesis. In Prochlorococcus marinus (strain MIT 9313), this protein is Adenine phosphoribosyltransferase.